Reading from the N-terminus, the 280-residue chain is 4-diphosphocytidyl-2-C-methyl-D-erythritol kinase (280 aa).

The active site involves K8. 91 to 101 is a binding site for ATP; sequence PVAAGLAGGST. Residue D133 is part of the active site.

Belongs to the GHMP kinase family. IspE subfamily.

It catalyses the reaction 4-CDP-2-C-methyl-D-erythritol + ATP = 4-CDP-2-C-methyl-D-erythritol 2-phosphate + ADP + H(+). It participates in isoprenoid biosynthesis; isopentenyl diphosphate biosynthesis via DXP pathway; isopentenyl diphosphate from 1-deoxy-D-xylulose 5-phosphate: step 3/6. Functionally, catalyzes the phosphorylation of the position 2 hydroxy group of 4-diphosphocytidyl-2C-methyl-D-erythritol. This chain is 4-diphosphocytidyl-2-C-methyl-D-erythritol kinase, found in Clostridium botulinum (strain ATCC 19397 / Type A).